Here is a 205-residue protein sequence, read N- to C-terminus: Holliday junction branch migration complex subunit RuvA (205 aa).

Residues 1-64 (MIGKLKGVVD…EDMIRLYGFR (64 aa)) are domain I. A domain II region spans residues 65-143 (SDAEREWFRL…AFAPVDPALV (79 aa)). A flexible linker region spans residues 144–152 (ALAGAVEEG). Positions 153–205 (AAPQPVADAVSALVNLGYPQVQAAAAIAAALKGAGEGAEAKVLIRLGLRELAR) are domain III.

The protein belongs to the RuvA family. As to quaternary structure, homotetramer. Forms an RuvA(8)-RuvB(12)-Holliday junction (HJ) complex. HJ DNA is sandwiched between 2 RuvA tetramers; dsDNA enters through RuvA and exits via RuvB. An RuvB hexamer assembles on each DNA strand where it exits the tetramer. Each RuvB hexamer is contacted by two RuvA subunits (via domain III) on 2 adjacent RuvB subunits; this complex drives branch migration. In the full resolvosome a probable DNA-RuvA(4)-RuvB(12)-RuvC(2) complex forms which resolves the HJ.

The protein resides in the cytoplasm. The RuvA-RuvB-RuvC complex processes Holliday junction (HJ) DNA during genetic recombination and DNA repair, while the RuvA-RuvB complex plays an important role in the rescue of blocked DNA replication forks via replication fork reversal (RFR). RuvA specifically binds to HJ cruciform DNA, conferring on it an open structure. The RuvB hexamer acts as an ATP-dependent pump, pulling dsDNA into and through the RuvAB complex. HJ branch migration allows RuvC to scan DNA until it finds its consensus sequence, where it cleaves and resolves the cruciform DNA. The protein is Holliday junction branch migration complex subunit RuvA of Methylobacterium radiotolerans (strain ATCC 27329 / DSM 1819 / JCM 2831 / NBRC 15690 / NCIMB 10815 / 0-1).